The sequence spans 881 residues: Putative outer membrane usher protein YfcU (881 aa).

The first 29 residues, 1–29 (MPDHSLFRLRILPWCIALAMSGSYSSVWA), serve as a signal peptide directing secretion.

The protein belongs to the fimbrial export usher family.

Its subcellular location is the cell outer membrane. Part of the yfcOPQRSUV fimbrial operon. Could contribute to adhesion to various surfaces in specific environmental niches. Increases adhesion to eukaryotic T24 bladder epithelial cells in the absence of fim genes. Probably involved in the export and assembly of fimbrial subunits across the outer membrane. The chain is Putative outer membrane usher protein YfcU (yfcU) from Escherichia coli (strain K12).